Here is a 526-residue protein sequence, read N- to C-terminus: Na(+)/H(+) antiporter NhaB (526 aa).

13 consecutive transmembrane segments (helical) span residues 14 to 34 (FLGY…LINP), 35 to 55 (LLFY…EFIF), 99 to 119 (MLLV…LFVF), 122 to 142 (LLLR…AAAF), 146 to 166 (FLDA…FYGI), 206 to 226 (LMMH…VGEP), 239 to 259 (FVDF…CGIL), 307 to 327 (AVIG…VGLI), 328 to 348 (GLSV…HAIG), 357 to 377 (FTAL…QQLF), 397 to 417 (YLFN…SVYI), 451 to 471 (ATPN…APLI), and 479 to 499 (VIMA…CVEF).

The protein belongs to the NhaB Na(+)/H(+) (TC 2.A.34) antiporter family.

The protein localises to the cell inner membrane. It catalyses the reaction 2 Na(+)(in) + 3 H(+)(out) = 2 Na(+)(out) + 3 H(+)(in). Functionally, na(+)/H(+) antiporter that extrudes sodium in exchange for external protons. This is Na(+)/H(+) antiporter NhaB from Pectobacterium atrosepticum (strain SCRI 1043 / ATCC BAA-672) (Erwinia carotovora subsp. atroseptica).